A 447-amino-acid polypeptide reads, in one-letter code: Na(+)-translocating NADH-quinone reductase subunit A (447 aa).

The protein belongs to the NqrA family. Composed of six subunits; NqrA, NqrB, NqrC, NqrD, NqrE and NqrF.

It carries out the reaction a ubiquinone + n Na(+)(in) + NADH + H(+) = a ubiquinol + n Na(+)(out) + NAD(+). NQR complex catalyzes the reduction of ubiquinone-1 to ubiquinol by two successive reactions, coupled with the transport of Na(+) ions from the cytoplasm to the periplasm. NqrA to NqrE are probably involved in the second step, the conversion of ubisemiquinone to ubiquinol. In Klebsiella pneumoniae subsp. pneumoniae (strain ATCC 700721 / MGH 78578), this protein is Na(+)-translocating NADH-quinone reductase subunit A.